A 424-amino-acid polypeptide reads, in one-letter code: Enolase (424 aa).

Residue Gln-165 participates in (2R)-2-phosphoglycerate binding. Glu-207 functions as the Proton donor in the catalytic mechanism. Mg(2+) contacts are provided by Asp-244, Glu-283, and Asp-310. 4 residues coordinate (2R)-2-phosphoglycerate: Lys-335, Arg-364, Ser-365, and Lys-386. Lys-335 acts as the Proton acceptor in catalysis.

This sequence belongs to the enolase family. It depends on Mg(2+) as a cofactor.

It is found in the cytoplasm. It localises to the secreted. The protein resides in the cell surface. The enzyme catalyses (2R)-2-phosphoglycerate = phosphoenolpyruvate + H2O. It functions in the pathway carbohydrate degradation; glycolysis; pyruvate from D-glyceraldehyde 3-phosphate: step 4/5. Catalyzes the reversible conversion of 2-phosphoglycerate (2-PG) into phosphoenolpyruvate (PEP). It is essential for the degradation of carbohydrates via glycolysis. In Chlamydia felis (strain Fe/C-56) (Chlamydophila felis), this protein is Enolase.